A 240-amino-acid polypeptide reads, in one-letter code: Uridylate kinase (240 aa).

Residue 13 to 16 participates in ATP binding; it reads KLSG. Residues 21 to 26 are involved in allosteric activation by GTP; sequence GEQGYG. Glycine 55 provides a ligand contact to UMP. Residues glycine 56 and arginine 60 each contribute to the ATP site. UMP-binding positions include aspartate 75 and 137 to 144; that span reads TGNPFFST. Positions 164, 170, and 173 each coordinate ATP.

This sequence belongs to the UMP kinase family. In terms of assembly, homohexamer.

The protein resides in the cytoplasm. It catalyses the reaction UMP + ATP = UDP + ADP. Its pathway is pyrimidine metabolism; CTP biosynthesis via de novo pathway; UDP from UMP (UMPK route): step 1/1. With respect to regulation, allosterically activated by GTP. Inhibited by UTP. In terms of biological role, catalyzes the reversible phosphorylation of UMP to UDP. This is Uridylate kinase from Aquifex aeolicus (strain VF5).